A 301-amino-acid polypeptide reads, in one-letter code: Transmembrane protein 178A (301 aa).

The signal sequence occupies residues 1–25; sequence MEKRALVTAISLSMSLLALMLLVTA. Residues 26–183 lie on the Extracellular side of the membrane; it reads IFTDHWYETD…LLHLRRITAG (158 aa). A glycan (N-linked (GlcNAc...) asparagine) is linked at Asn-162. The helical transmembrane segment at 184–204 threads the bilayer; it reads FLGMAAAVMLCGSIVAAVGFF. At 205-215 the chain is on the cytoplasmic side; that stretch reads WEESLTQHVSG. A helical membrane pass occupies residues 216–236; that stretch reads LLFLMAGIFCTISLCTYAASV. The Extracellular segment spans residues 237 to 258; it reads SYDLSRNPPFIYGLPSDVDHGY. The chain crosses the membrane as a helical span at residues 259–279; the sequence is GWSIFCAWVSLGLTVASGCIC. At 280–301 the chain is on the cytoplasmic side; the sequence is TTYPFLSRTKALRSKTARESSV.

Belongs to the TMEM178 family.

It localises to the endoplasmic reticulum membrane. May act as a negative regulator of osteoclast differentiation. The protein is Transmembrane protein 178A (tmem178a) of Danio rerio (Zebrafish).